Here is a 474-residue protein sequence, read N- to C-terminus: 3-isopropylmalate dehydratase large subunit (474 aa).

The [4Fe-4S] cluster site is built by cysteine 352, cysteine 413, and cysteine 416.

It belongs to the aconitase/IPM isomerase family. LeuC type 1 subfamily. Heterodimer of LeuC and LeuD. Requires [4Fe-4S] cluster as cofactor.

The enzyme catalyses (2R,3S)-3-isopropylmalate = (2S)-2-isopropylmalate. Its pathway is amino-acid biosynthesis; L-leucine biosynthesis; L-leucine from 3-methyl-2-oxobutanoate: step 2/4. Catalyzes the isomerization between 2-isopropylmalate and 3-isopropylmalate, via the formation of 2-isopropylmaleate. In Pseudomonas savastanoi pv. phaseolicola (strain 1448A / Race 6) (Pseudomonas syringae pv. phaseolicola (strain 1448A / Race 6)), this protein is 3-isopropylmalate dehydratase large subunit.